The following is a 228-amino-acid chain: L-ribulose-5-phosphate 4-epimerase UlaF (228 aa).

Substrate is bound by residues 26–27 (GN), 43–44 (SG), and 72–73 (SS). Asp74, His93, and His95 together coordinate Zn(2+). Asp118 acts as the Proton donor/acceptor in catalysis. His167 is a Zn(2+) binding site. The active-site Proton donor/acceptor is Tyr225.

The protein belongs to the aldolase class II family. AraD/FucA subfamily. It depends on Zn(2+) as a cofactor.

The enzyme catalyses L-ribulose 5-phosphate = D-xylulose 5-phosphate. It functions in the pathway cofactor degradation; L-ascorbate degradation; D-xylulose 5-phosphate from L-ascorbate: step 4/4. Its function is as follows. Catalyzes the isomerization of L-ribulose 5-phosphate to D-xylulose 5-phosphate. Is involved in the anaerobic L-ascorbate utilization. The sequence is that of L-ribulose-5-phosphate 4-epimerase UlaF from Escherichia coli (strain SE11).